The chain runs to 464 residues: MRKVLLVEPVIFIYIFASSLTSPVVQQFIYRKLWEEEYNSTAISSDNSSHCERNKSSPTYVMEKAIQEKTSFFNMQLDLTGAVPSLIVAFIIVANGDHQGRKKSLVLPSIGALIADIFLTIVSYFSWPTSVLFLATFISGLFGSMATFLGGGFAYIADQCHDEKQKTTRIAVIDLIFGVVSGLAGLSSGYFLREMGFTWTFATASLLHVVNIIYITFFLQDTVHISEFQQQAPLSYKEHLKETFSGVYMLFKTAPSKKRILIIVLLFIFMTYLFTMFGGSSLFTLYELDEPLCWTEVYIGYGAAAFTSISLTSFLGVYLFSKCLKDIYIVFIGIFSYIGGIVMAAFAKTTLLMFLVRVPSLFSIMPIPVLRSMLSKVVLPSEQGAVFACIACLEVLTGTISLSVFNVIYAATVAWFSGFSFLLSASLCLIPLGVLCWLLCTSWNGEDLALLVPEEVSSIDSVDS.

The signal sequence occupies residues 1-26; sequence MRKVLLVEPVIFIYIFASSLTSPVVQ. The Extracellular segment spans residues 27-71; it reads QFIYRKLWEEEYNSTAISSDNSSHCERNKSSPTYVMEKAIQEKTS. N-linked (GlcNAc...) asparagine glycans are attached at residues asparagine 39, asparagine 47, and asparagine 54. The chain crosses the membrane as a helical span at residues 72-92; the sequence is FFNMQLDLTGAVPSLIVAFII. Topologically, residues 93-104 are cytoplasmic; it reads VANGDHQGRKKS. Residues 105–125 form a helical membrane-spanning segment; it reads LVLPSIGALIADIFLTIVSYF. At 126 to 130 the chain is on the extracellular side; the sequence is SWPTS. Residues 131–151 form a helical membrane-spanning segment; that stretch reads VLFLATFISGLFGSMATFLGG. Residues 152-171 are Cytoplasmic-facing; it reads GFAYIADQCHDEKQKTTRIA. Residues 172 to 192 form a helical membrane-spanning segment; that stretch reads VIDLIFGVVSGLAGLSSGYFL. The Extracellular portion of the chain corresponds to 193–198; the sequence is REMGFT. The chain crosses the membrane as a helical span at residues 199–219; sequence WTFATASLLHVVNIIYITFFL. Residues 220–259 are Cytoplasmic-facing; sequence QDTVHISEFQQQAPLSYKEHLKETFSGVYMLFKTAPSKKR. A helical membrane pass occupies residues 260–280; the sequence is ILIIVLLFIFMTYLFTMFGGS. Residues 281 to 296 are Extracellular-facing; the sequence is SLFTLYELDEPLCWTE. A helical membrane pass occupies residues 297–317; the sequence is VYIGYGAAAFTSISLTSFLGV. Residues 318–326 are Cytoplasmic-facing; sequence YLFSKCLKD. A helical transmembrane segment spans residues 327 to 347; sequence IYIVFIGIFSYIGGIVMAAFA. Residues 348–349 lie on the Extracellular side of the membrane; that stretch reads KT. A helical transmembrane segment spans residues 350 to 370; the sequence is TLLMFLVRVPSLFSIMPIPVL. Over 371–384 the chain is Cytoplasmic; the sequence is RSMLSKVVLPSEQG. The helical transmembrane segment at 385–405 threads the bilayer; it reads AVFACIACLEVLTGTISLSVF. Over 406–418 the chain is Extracellular; sequence NVIYAATVAWFSG. Residues 419–439 form a helical membrane-spanning segment; it reads FSFLLSASLCLIPLGVLCWLL. Topologically, residues 440 to 464 are cytoplasmic; that stretch reads CTSWNGEDLALLVPEEVSSIDSVDS.

It belongs to the major facilitator superfamily. SLC46A family.

It is found in the lysosome membrane. The catalysed reaction is estrone 3-sulfate(out) + n H(+)(out) = estrone 3-sulfate(in) + n H(+)(in). It carries out the reaction 25-hydroxyvitamin D3 sulfate(out) + n H(+)(out) = 25-hydroxyvitamin D3 sulfate(in) + n H(+)(in). It catalyses the reaction cholate(out) + n H(+)(out) = cholate(in) + n H(+)(in). The enzyme catalyses glycocholate(out) + n H(+)(out) = glycocholate(in) + n H(+)(in). The catalysed reaction is taurocholate(out) + n H(+)(out) = taurocholate(in) + n H(+)(in). It carries out the reaction dehydroepiandrosterone 3-sulfate(out) + n H(+)(out) = dehydroepiandrosterone 3-sulfate(in) + n H(+)(in). Its function is as follows. Lysosomal proton-coupled steroid conjugate and bile acid transporter. Preferentially recognizes lipophilic steroid conjugates or bile acis as endogenous substrates and seems to mediate escape from lysosomes to the cytoplasm. Modulates hepatic cytosolic copper homeostasis, maybe acting as a lysosomal copper transporter and sequestering copper ions in the lysosome. The sequence is that of Lysosomal proton-coupled steroid conjugate and bile acid symporter SLC46A3 (SLC46A3) from Gallus gallus (Chicken).